The chain runs to 460 residues: CWF19-like protein 2 homolog (460 aa).

3 disordered regions span residues 38–78 (GKTF…EDEK), 103–175 (KLES…TGTA), and 193–227 (RRHD…ESIK). Polar residues predominate over residues 54–68 (GSQQVRNDVMKSSDS). Positions 84–106 (KILKAEMKGDTDLVKKLKRKLES) form a coiled coil. Basic and acidic residues-rich tracts occupy residues 113–131 (EPPK…DREG), 139–172 (RRSD…EEKT), and 205–227 (EMQK…ESIK). Residues 210-231 (KKKSDEKDKKRKEKESIKEHKR) are a coiled coil.

Belongs to the CWF19 family.

The protein is CWF19-like protein 2 homolog of Caenorhabditis elegans.